The primary structure comprises 251 residues: tRNA pseudouridine synthase A (251 aa).

The active-site Nucleophile is Asp-54. Tyr-111 provides a ligand contact to substrate.

It belongs to the tRNA pseudouridine synthase TruA family. Homodimer.

The enzyme catalyses uridine(38/39/40) in tRNA = pseudouridine(38/39/40) in tRNA. In terms of biological role, formation of pseudouridine at positions 38, 39 and 40 in the anticodon stem and loop of transfer RNAs. This is tRNA pseudouridine synthase A from Mycoplasma mycoides subsp. mycoides SC (strain CCUG 32753 / NCTC 10114 / PG1).